The chain runs to 434 residues: Homogentisate 1,2-dioxygenase (434 aa).

Residue histidine 289 is the Proton acceptor of the active site. Fe cation contacts are provided by histidine 332 and glutamate 338. 2 residues coordinate homogentisate: tyrosine 347 and histidine 368. Histidine 368 contributes to the Fe cation binding site.

It belongs to the homogentisate dioxygenase family. Hexamer; dimer of trimers. Requires Fe cation as cofactor.

It carries out the reaction homogentisate + O2 = 4-maleylacetoacetate + H(+). It participates in amino-acid degradation; L-phenylalanine degradation; acetoacetate and fumarate from L-phenylalanine: step 4/6. Its function is as follows. Involved in the catabolism of homogentisate (2,5-dihydroxyphenylacetate or 2,5-OH-PhAc), a central intermediate in the degradation of phenylalanine and tyrosine. Catalyzes the oxidative ring cleavage of the aromatic ring of homogentisate to yield maleylacetoacetate. This is Homogentisate 1,2-dioxygenase from Pseudomonas syringae pv. syringae (strain B728a).